A 249-amino-acid chain; its full sequence is Protein-lysine 6-oxidase (249 aa).

Position 19 is a sulfotyrosine (tyrosine 19). Positions 45-249 (PDLVPDPYYI…YASGCTISPY (205 aa)) are lysyl-oxidase like. Disulfide bonds link cysteine 70-cysteine 76, cysteine 123-cysteine 172, cysteine 156-cysteine 162, cysteine 183-cysteine 193, and cysteine 230-cysteine 244. Residues histidine 124, histidine 126, and histidine 128 each contribute to the Cu cation site. Residues 152-187 (KASFCLEDTSCDYGYHRRFACTAHTQGLSPGCYDTY) constitute a cross-link (lysine tyrosylquinone (Lys-Tyr)). A 2',4',5'-topaquinone modification is found at tyrosine 187.

Belongs to the lysyl oxidase family. In terms of assembly, interacts with MFAP4. Interacts (via propeptide) with EFEMP2; this interaction is strong and facilitates formation of ternary complexes with ELN during elastic fiber assembly; this interaction limits interaction of EFEMP2 with FBLN5. Cu cation is required as a cofactor. Requires lysine tyrosylquinone residue as cofactor. Post-translationally, the lysine tyrosylquinone cross-link (LTQ) is generated by condensation of the epsilon-amino group of a lysine with a topaquinone produced by oxidation of tyrosine. Proteolytically cleaved by BMP1 which removes the propeptide. Also proteolytically cleaved by ADAMTS2 and ADAMTS14, but not by ADAMTS3, at an additional cleavage site downstream of the BMP1 cleavage site. The propeptide plays a role in directing the deposition of this enzyme to elastic fibers, via interaction with tropoelastin. Cleavage by BMP1 to remove the propeptide does not increase enzymatic activity but increases binding to collagen. Cleavage by ADAMTS2 produces a form with reduced collagen-binding activity. In terms of processing, sulfated at Tyr-19 and also at either Tyr-15 or Tyr-16 which enhances binding to collagen.

Its subcellular location is the secreted. The protein resides in the extracellular space. The catalysed reaction is L-lysyl-[protein] + O2 + H2O = (S)-2-amino-6-oxohexanoyl-[protein] + H2O2 + NH4(+). Responsible for the post-translational oxidative deamination of peptidyl lysine residues in precursors to fibrous collagen and elastin. Regulator of Ras expression. May play a role in tumor suppression. Plays a role in the aortic wall architecture. The sequence is that of Protein-lysine 6-oxidase from Sus scrofa (Pig).